The sequence spans 760 residues: 5-methyltetrahydropteroyltriglutamate--homocysteine methyltransferase (760 aa).

5-methyltetrahydropteroyltri-L-glutamate contacts are provided by residues 24-27 (RELK) and Lys-118. L-homocysteine contacts are provided by residues 437–439 (IGS) and Glu-490. Residues 437–439 (IGS) and Glu-490 contribute to the L-methionine site. 5-methyltetrahydropteroyltri-L-glutamate is bound by residues 521–522 (RC) and Trp-567. Position 605 (Asp-605) interacts with L-homocysteine. Asp-605 lines the L-methionine pocket. Position 611 (Glu-611) interacts with 5-methyltetrahydropteroyltri-L-glutamate. Zn(2+) contacts are provided by His-647, Cys-649, and Glu-671. The active-site Proton donor is the His-700. Cys-732 provides a ligand contact to Zn(2+).

The protein belongs to the vitamin-B12 independent methionine synthase family. Zn(2+) is required as a cofactor.

It catalyses the reaction 5-methyltetrahydropteroyltri-L-glutamate + L-homocysteine = tetrahydropteroyltri-L-glutamate + L-methionine. It functions in the pathway amino-acid biosynthesis; L-methionine biosynthesis via de novo pathway; L-methionine from L-homocysteine (MetE route): step 1/1. Catalyzes the transfer of a methyl group from 5-methyltetrahydrofolate to homocysteine resulting in methionine formation. The sequence is that of 5-methyltetrahydropteroyltriglutamate--homocysteine methyltransferase from Mycobacterium leprae (strain TN).